Here is a 492-residue protein sequence, read N- to C-terminus: Prostaglandin E2 receptor EP4 subtype (492 aa).

Residues 1–19 are Extracellular-facing; sequence MSIPGTNASSSQASNPLNS. An N-linked (GlcNAc...) asparagine glycan is attached at Asn7. A helical transmembrane segment spans residues 20–43; sequence PVTIPAVMFIFGVVGNLVAIVVLC. Over 44 to 55 the chain is Cytoplasmic; sequence KSRKEQKETTFY. The helical transmembrane segment at 56–79 threads the bilayer; that stretch reads TLVCGLAVTDLLGTLLVSPVTIAT. Residues 80 to 96 lie on the Extracellular side of the membrane; the sequence is YLKGQWPGGHALCEYST. Residues Cys92 and Cys170 are joined by a disulfide bond. The chain crosses the membrane as a helical span at residues 97–115; sequence FILLFFGLSGLSIICAMSI. Over 116 to 135 the chain is Cytoplasmic; the sequence is ERYLAINHAYFYSHYVDKRL. Residues 136-160 traverse the membrane as a helical segment; the sequence is AGLTLFAVYASNVLFCALPSMGLGS. Over 161–184 the chain is Extracellular; sequence SRLQYPATWCFIDWTTNVTAHAAF. A helical membrane pass occupies residues 185–211; it reads SYMYAGFSSFLILATVLCNVLVCGALL. The Cytoplasmic portion of the chain corresponds to 212 to 273; the sequence is RMHRQFMRRT…RSFRRIAGAE (62 aa). Residues 274-301 form a helical membrane-spanning segment; it reads IQMVILLIATSLVVLICSIPLVVRVFVN. Residues 302–318 lie on the Extracellular side of the membrane; it reads QLYRPQLEPVIGKNPDL. A helical transmembrane segment spans residues 319 to 338; that stretch reads QAIRIASVSPILDPWIYILL. Topologically, residues 339 to 492 are cytoplasmic; it reads RKTVLSKAIE…ETLNLSEKCI (154 aa). A compositionally biased stretch (basic and acidic residues) spans 361 to 374; the sequence is RRERSGPHCSDSRR. Positions 361 to 383 are disordered; the sequence is RRERSGPHCSDSRRTSSAVSGHS. Residues Ser380, Ser383, Ser385, and Ser388 each carry the phosphoserine modification.

The protein belongs to the G-protein coupled receptor 1 family. As to quaternary structure, interacts with FEM1A. Phosphorylation mediates agonist-mediated desensitization by promoting cytoplasmic retention.

The protein resides in the cell membrane. Its function is as follows. Receptor for prostaglandin E2 (PGE2). The activity of this receptor is mediated by G(s) proteins that stimulate adenylate cyclase. Has a relaxing effect on smooth muscle. May play an important role in regulating renal hemodynamics, intestinal epithelial transport, adrenal aldosterone secretion, and uterine function. This chain is Prostaglandin E2 receptor EP4 subtype (PTGER4), found in Bos taurus (Bovine).